The chain runs to 438 residues: Chromosomal replication initiator protein DnaA (438 aa).

The segment at 1 to 74 is domain I, interacts with DnaA modulators; it reads MNEINKIWQK…SFYQITGSQV (74 aa). Residues 74-100 form a domain II region; the sequence is VEVKYIITGKEHETGLIEEKKQVIKKG. Residues 101-317 form a domain III, AAA+ region region; that stretch reads NLNPKYTFDT…GSLIKLCAYT (217 aa). Positions 145, 147, 148, and 149 each coordinate ATP. Residues 318–438 form a domain IV, binds dsDNA region; it reads SLTKVPISMD…DSIIKKVTGQ (121 aa).

Belongs to the DnaA family. In terms of assembly, oligomerizes as a right-handed, spiral filament on DNA at oriC.

It localises to the cytoplasm. In terms of biological role, plays an essential role in the initiation and regulation of chromosomal replication. ATP-DnaA binds to the origin of replication (oriC) to initiate formation of the DNA replication initiation complex once per cell cycle. Binds the DnaA box (a 9 base pair repeat at the origin) and separates the double-stranded (ds)DNA. Forms a right-handed helical filament on oriC DNA; dsDNA binds to the exterior of the filament while single-stranded (ss)DNA is stabiized in the filament's interior. The ATP-DnaA-oriC complex binds and stabilizes one strand of the AT-rich DNA unwinding element (DUE), permitting loading of DNA polymerase. After initiation quickly degrades to an ADP-DnaA complex that is not apt for DNA replication. Binds acidic phospholipids. The chain is Chromosomal replication initiator protein DnaA from Thermodesulfovibrio yellowstonii (strain ATCC 51303 / DSM 11347 / YP87).